The chain runs to 128 residues: Probable 4-amino-4-deoxy-L-arabinose-phosphoundecaprenol flippase subunit ArnF (128 aa).

The Cytoplasmic segment spans residues 1–5 (MKGYG). Residues 6–26 (WGIGSVVLVTVAQLILKWGMM) traverse the membrane as a helical segment. The Periplasmic portion of the chain corresponds to 27–47 (NTPLMSLADINGQFVFNHLPQ). The chain crosses the membrane as a helical span at residues 48-68 (FIAVICGLAGYALSMLCWFFA). The Cytoplasmic portion of the chain corresponds to 69–77 (LRYLPLNRA). Residues 78–98 (YPLLSLSYALVYLGAVSLPWF) traverse the membrane as a helical segment. The Periplasmic segment spans residues 99–101 (SES). A helical transmembrane segment spans residues 102-122 (ATLLKTLGAGFILLGIWLINT). Over 123–128 (KPIAKD) the chain is Cytoplasmic.

The protein belongs to the ArnF family. In terms of assembly, heterodimer of ArnE and ArnF.

It localises to the cell inner membrane. It participates in bacterial outer membrane biogenesis; lipopolysaccharide biosynthesis. Translocates 4-amino-4-deoxy-L-arabinose-phosphoundecaprenol (alpha-L-Ara4N-phosphoundecaprenol) from the cytoplasmic to the periplasmic side of the inner membrane. The sequence is that of Probable 4-amino-4-deoxy-L-arabinose-phosphoundecaprenol flippase subunit ArnF from Yersinia enterocolitica serotype O:8 / biotype 1B (strain NCTC 13174 / 8081).